A 384-amino-acid chain; its full sequence is GTPase Obg (384 aa).

Residues 1–159 enclose the Obg domain; that stretch reads MKFVDEVEIR…RPLKLELMLL (159 aa). The tract at residues 72 to 94 is disordered; that stretch reads NGMGKNCTGRRGNDIVLPVPPGT. The OBG-type G domain maps to 160–333; it reads ADVGLLGMPN…LCREVMSYLE (174 aa). GTP-binding positions include 166–173, 191–195, 213–216, 283–286, and 314–316; these read GMPNAGKS, FTTLI, DIPG, NKVD, and AAL. Ser173 and Thr193 together coordinate Mg(2+). A disordered region spans residues 358 to 384; it reads EEVLEEEMDDEDDDDDDDHDVEVIYQK. The span at 360 to 377 shows a compositional bias: acidic residues; it reads VLEEEMDDEDDDDDDDHD.

Belongs to the TRAFAC class OBG-HflX-like GTPase superfamily. OBG GTPase family. As to quaternary structure, monomer. The cofactor is Mg(2+).

It localises to the cytoplasm. Functionally, an essential GTPase which binds GTP, GDP and possibly (p)ppGpp with moderate affinity, with high nucleotide exchange rates and a fairly low GTP hydrolysis rate. Plays a role in control of the cell cycle, stress response, ribosome biogenesis and in those bacteria that undergo differentiation, in morphogenesis control. The sequence is that of GTPase Obg from Idiomarina loihiensis (strain ATCC BAA-735 / DSM 15497 / L2-TR).